The following is a 541-amino-acid chain: Presenilin homolog (541 aa).

2 stretches are compositionally biased toward polar residues: residues 1–14 (MAAV…SSGL) and 43–52 (NNYGSSNQDQ). 2 disordered regions span residues 1–52 (MAAV…NQDQ) and 69–92 (CGSR…NEME). The Cytoplasmic segment spans residues 1–106 (MAAVNLQASC…LKYGAQHVIK (106 aa)). Residues 107 to 127 (LFVPVSLCMLVVVATINSISF) form a helical membrane-spanning segment. Residues 128–154 (YNSTDVYLLYTPFHEQSPEPSVKFWSA) are Lumenal-facing. An N-linked (GlcNAc...) asparagine glycan is attached at N129. A helical transmembrane segment spans residues 155–175 (LANSLILMSVVVVMTFLLIVL). Over 176–182 (YKKRCYR) the chain is Cytoplasmic. A helical transmembrane segment spans residues 183–203 (IIHGWLILSSFMLLFIFTYLY). The Lumenal segment spans residues 204 to 216 (LEELLRAYNIPMD). A helical membrane pass occupies residues 217–237 (YPTALLIMWNFGVVGMMSIHW). The Cytoplasmic portion of the chain corresponds to 238–242 (QGPLR). Residues 243–263 (LQQGYLIFVAALMALVFIKYL) form a helical membrane-spanning segment. The Lumenal segment spans residues 264-265 (PE). Residues 266 to 286 (WTAWAVLAAISIWDLIAVLSP) form a helical membrane-spanning segment. The active site involves D279. Over 287–453 (RGPLRILVET…QNHPDGQEER (167 aa)) the chain is Cytoplasmic. Positions 320-481 (NTVTPQQSQA…ASSYGDWTTT (162 aa)) are interaction with Mettl2. The segment covering 327–350 (SQATASSSPSSSNSTTTTRATQNS) has biased composition (low complexity). Disordered regions lie at residues 327 to 379 (SQAT…DGSV) and 421 to 449 (EVQS…HPDG). Polar residues-rich tracts occupy residues 361–370 (GQRTGNSHPR) and 421–443 (EVQS…TAPD). Residues 454-474 (GIKLGLGDFIFYSVLVGKASS) form a helical membrane-spanning segment. D461 is a catalytic residue. At 475 to 481 (YGDWTTT) the chain is on the lumenal side. Residues 482–502 (IACFVAILIGLCLTLLLLAIW) form a helical membrane-spanning segment. Residues 503–506 (RKAL) lie on the Cytoplasmic side of the membrane. The short motif at 507-509 (PAL) is the PAL element. Residues 507-527 (PALPISITFGLIFCFATSAVV) constitute an intramembrane region (helical). Residues 528–541 (KPFMEDLSAKQVFI) are Cytoplasmic-facing.

Belongs to the peptidase A22A family. In terms of assembly, homodimer. Component of the gamma-secretase complex, a complex composed of a presenilin (Psn) homodimer, nicastrin (Nct), Aph-1 and Pen-2. Interacts with Mettl2. Isoform 2 shows a better interaction with Mettl2 than isoform 1. Cleaved. The cleavage, which probably takes place between the 6th and the 7th transmembrane regions, may be required for activation of the gamma-secretase activity. As to expression, maternally expressed in nurse and follicle cells. In early embryos, expressed in all or most cells and later increases in CNS and epidermal tissues. In larvae, expression is seen in all imaginal disks, brain and optic lobes. In pupae, expression is seen in eye disk and brain.

It is found in the endoplasmic reticulum membrane. The protein localises to the golgi apparatus membrane. In terms of biological role, probable catalytic subunit of the gamma-secretase complex, an endoprotease complex that catalyzes the intramembrane cleavage of integral membrane proteins such as Notch receptor. Required for S3 cleavage of Notch, which releases activated Notch protein from the cell membrane. Involved in the patterning of the optic lobes. The chain is Presenilin homolog (Psn) from Drosophila melanogaster (Fruit fly).